The chain runs to 152 residues: Large ribosomal subunit protein bL9 (152 aa).

The protein belongs to the bacterial ribosomal protein bL9 family.

Its function is as follows. Binds to the 23S rRNA. In Prochlorococcus marinus (strain MIT 9211), this protein is Large ribosomal subunit protein bL9.